The following is an 88-amino-acid chain: DNA-directed RNA polymerase subunit omega (88 aa).

The protein belongs to the RNA polymerase subunit omega family. The RNAP catalytic core consists of 2 alpha, 1 beta, 1 beta' and 1 omega subunit. When a sigma factor is associated with the core the holoenzyme is formed, which can initiate transcription.

The enzyme catalyses RNA(n) + a ribonucleoside 5'-triphosphate = RNA(n+1) + diphosphate. Promotes RNA polymerase assembly. Latches the N- and C-terminal regions of the beta' subunit thereby facilitating its interaction with the beta and alpha subunits. This Yersinia pestis (strain Pestoides F) protein is DNA-directed RNA polymerase subunit omega.